Reading from the N-terminus, the 314-residue chain is Protein translocase subunit SecF (314 aa).

6 helical membrane-spanning segments follow: residues 17-37 (AVAV…TRGL), 137-157 (QGTY…WWRY), 158-178 (ELNF…ITLG), 188-210 (SLPV…IVVF), 250-270 (TLIV…GFAF), and 272-292 (LLVG…LLLV).

It belongs to the SecD/SecF family. SecF subfamily. As to quaternary structure, forms a complex with SecD. Part of the essential Sec protein translocation apparatus which comprises SecA, SecYEG and auxiliary proteins SecDF. Other proteins may also be involved.

It is found in the cell inner membrane. Part of the Sec protein translocase complex. Interacts with the SecYEG preprotein conducting channel. SecDF uses the proton motive force (PMF) to complete protein translocation after the ATP-dependent function of SecA. The polypeptide is Protein translocase subunit SecF (Desulfurispirillum indicum (strain ATCC BAA-1389 / DSM 22839 / S5)).